The following is an 892-amino-acid chain: DNA mismatch repair protein MutS (892 aa).

Residue 634–641 (GPNMGGKS) coordinates ATP.

Belongs to the DNA mismatch repair MutS family.

In terms of biological role, this protein is involved in the repair of mismatches in DNA. It is possible that it carries out the mismatch recognition step. This protein has a weak ATPase activity. This is DNA mismatch repair protein MutS from Paraburkholderia phymatum (strain DSM 17167 / CIP 108236 / LMG 21445 / STM815) (Burkholderia phymatum).